A 106-amino-acid polypeptide reads, in one-letter code: ATP-dependent Clp protease adapter protein ClpS (106 aa).

The span at 1–13 (MPRNTSHEHDHGL) shows a compositional bias: basic and acidic residues. Residues 1 to 20 (MPRNTSHEHDHGLMVEASKP) are disordered.

It belongs to the ClpS family. In terms of assembly, binds to the N-terminal domain of the chaperone ClpA.

Its function is as follows. Involved in the modulation of the specificity of the ClpAP-mediated ATP-dependent protein degradation. This chain is ATP-dependent Clp protease adapter protein ClpS, found in Xanthomonas axonopodis pv. citri (strain 306).